A 367-amino-acid polypeptide reads, in one-letter code: Aflatoxin B1 aldehyde reductase member 2 (367 aa).

Residues 1-46 (MLRAVSRAVSRAAVRCAWRSGPSVARPLAMSRSPAPRAVSGAPLRP) constitute a mitochondrion transit peptide. Residues 27–46 (PLAMSRSPAPRAVSGAPLRP) are disordered. At serine 40 the chain carries Phosphoserine. Phosphothreonine is present on threonine 48. Residue aspartate 80 participates in NADP(+) binding. Tyrosine 85 (proton donor) is an active-site residue. Lysine 136 is subject to N6-acetyllysine. Position 149 (histidine 149) interacts with substrate. NADP(+)-binding positions include 179–180 (SN), glutamine 205, 234–244 (NPLAGGLLTGK), and arginine 258. Position 244 is an N6-succinyllysine (lysine 244). Serine 263 carries the post-translational modification Phosphoserine. Substrate is bound by residues tyrosine 268 and arginine 271. Residue 326 to 334 (SSLEQLEQN) coordinates NADP(+). Substrate is bound at residue arginine 367.

Belongs to the aldo/keto reductase family. Aldo/keto reductase 2 subfamily. Homodimer. Heterodimer with AKR7A1.

It localises to the mitochondrion. The protein localises to the golgi apparatus. The protein resides in the golgi stack. Its subcellular location is the cytoplasm. It catalyses the reaction 4-hydroxybutanoate + NADP(+) = succinate semialdehyde + NADPH + H(+). Catalyzes the NADPH-dependent reduction of succinic semialdehyde to gamma-hydroxybutyrate. May have an important role in producing the neuromodulator gamma-hydroxybutyrate (GHB). Has broad substrate specificity. Can reduce the dialdehyde protein-binding form of aflatoxin B1 (AFB1) to the non-binding AFB1 dialcohol. Acts as a 2-carboxybenzaldehyde reductase. The protein is Aflatoxin B1 aldehyde reductase member 2 (Akr7a2) of Rattus norvegicus (Rat).